The chain runs to 252 residues: Acetoacetate decarboxylase (252 aa).

Lysine 116 functions as the Schiff-base intermediate with acetoacetate in the catalytic mechanism.

It belongs to the ADC family.

The catalysed reaction is acetoacetate + H(+) = acetone + CO2. In terms of biological role, catalyzes the conversion of acetoacetate to acetone and carbon dioxide. This Paraburkholderia phytofirmans (strain DSM 17436 / LMG 22146 / PsJN) (Burkholderia phytofirmans) protein is Acetoacetate decarboxylase.